The primary structure comprises 239 residues: Small ribosomal subunit protein uS3 (239 aa).

The KH type-2 domain occupies 39–107 (VREFLRKKLA…ATSINIEEIR (69 aa)). The segment at 215-239 (TSNTNELSDEKRNRRKPRNANRRKE) is disordered. A compositionally biased stretch (basic residues) spans 227–239 (NRRKPRNANRRKE).

Belongs to the universal ribosomal protein uS3 family. In terms of assembly, part of the 30S ribosomal subunit. Forms a tight complex with proteins S10 and S14.

Binds the lower part of the 30S subunit head. Binds mRNA in the 70S ribosome, positioning it for translation. In Dichelobacter nodosus (strain VCS1703A), this protein is Small ribosomal subunit protein uS3.